The following is a 1872-amino-acid chain: Chitin synthase 6 (1872 aa).

The tract at residues 1-23 (MAQHLPPVGGNGGAHTQPSLPAL) is disordered. The 779-residue stretch at 1 to 779 (MAQHLPPVGG…CWMEIAQLSD (779 aa)) folds into the Myosin motor domain. 104-111 (GESGSGKT) serves as a coordination point for ATP. Residues asparagine 123, asparagine 291, asparagine 428, and asparagine 559 are each glycosylated (N-linked (GlcNAc...) asparagine). The disordered stretch occupies residues 587–652 (VMQASVSSKP…VNKPSEEGAS (66 aa)). Residues 659 to 683 (LDNVTKSFHAQNTNAYFVFCLKPND) form an actin-binding region. A glycan (N-linked (GlcNAc...) asparagine) is linked at asparagine 661. The next 2 helical transmembrane spans lie at 881 to 901 (WVFI…QHLG) and 920 to 940 (FIIW…PMLV). A Cytochrome b5 heme-binding domain is found at 944–1003 (QYVFTGEELSAYNGKDGKASYAAIRGQVFDIGSFIPRHPLPYLPSKLFTQYAGTDITGLF). Asparagine 1030, asparagine 1055, and asparagine 1120 each carry an N-linked (GlcNAc...) asparagine glycan. Residues 1193–1213 (FILAVTIILCSIIAFKFLAAL) form a helical membrane-spanning segment. Residues asparagine 1450 and asparagine 1556 are each glycosylated (N-linked (GlcNAc...) asparagine). Helical transmembrane passes span 1581–1601 (FIVF…AYIV), 1614–1634 (VPVL…IIFI), and 1641–1661 (MIAW…GLPL). The region spanning 1814-1869 (LPSDDALLAEIREILRTADLMTVTKKGVKQELERRFGVNLDSRRAYINSATEALLS) is the DEK-C domain.

It belongs to the chitin synthase family. Class V subfamily.

It localises to the cell membrane. The enzyme catalyses [(1-&gt;4)-N-acetyl-beta-D-glucosaminyl](n) + UDP-N-acetyl-alpha-D-glucosamine = [(1-&gt;4)-N-acetyl-beta-D-glucosaminyl](n+1) + UDP + H(+). Polymerizes chitin, a structural polymer of the cell wall and septum, by transferring the sugar moiety of UDP-GlcNAc to the non-reducing end of the growing chitin polymer. Required for appressorium penetration and invasive growth. The sequence is that of Chitin synthase 6 from Pyricularia oryzae (strain 70-15 / ATCC MYA-4617 / FGSC 8958) (Rice blast fungus).